The chain runs to 158 residues: Hypoxanthine DNA glycosylase (158 aa).

Residue asparagine 39 is part of the active site.

This sequence belongs to the uracil-DNA glycosylase (UDG) superfamily. Type 6 (HDG) family.

In terms of biological role, excises hypoxanthine, a deamination product of adenine, from double-stranded DNA. Acts on double-stranded DNA containing G/I, T/I, A/I and C/I base pairs, but not on single-stranded inosine-containing DNA. Also has minor xanthine DNA glycosylase activity. Lacks any detectable uracil-DNA glycosylase activity. This chain is Hypoxanthine DNA glycosylase, found in Methanosarcina barkeri (strain Fusaro / DSM 804).